Here is a 366-residue protein sequence, read N- to C-terminus: UDP-N-acetylglucosamine--N-acetylmuramyl-(pentapeptide) pyrophosphoryl-undecaprenol N-acetylglucosamine transferase (366 aa).

UDP-N-acetyl-alpha-D-glucosamine-binding positions include 10–12 (TGG), asparagine 124, serine 195, and glutamine 295.

This sequence belongs to the glycosyltransferase 28 family. MurG subfamily.

It localises to the cell membrane. The enzyme catalyses di-trans,octa-cis-undecaprenyl diphospho-N-acetyl-alpha-D-muramoyl-L-alanyl-D-glutamyl-meso-2,6-diaminopimeloyl-D-alanyl-D-alanine + UDP-N-acetyl-alpha-D-glucosamine = di-trans,octa-cis-undecaprenyl diphospho-[N-acetyl-alpha-D-glucosaminyl-(1-&gt;4)]-N-acetyl-alpha-D-muramoyl-L-alanyl-D-glutamyl-meso-2,6-diaminopimeloyl-D-alanyl-D-alanine + UDP + H(+). It functions in the pathway cell wall biogenesis; peptidoglycan biosynthesis. Its function is as follows. Cell wall formation. Catalyzes the transfer of a GlcNAc subunit on undecaprenyl-pyrophosphoryl-MurNAc-pentapeptide (lipid intermediate I) to form undecaprenyl-pyrophosphoryl-MurNAc-(pentapeptide)GlcNAc (lipid intermediate II). This Bacillus licheniformis (strain ATCC 14580 / DSM 13 / JCM 2505 / CCUG 7422 / NBRC 12200 / NCIMB 9375 / NCTC 10341 / NRRL NRS-1264 / Gibson 46) protein is UDP-N-acetylglucosamine--N-acetylmuramyl-(pentapeptide) pyrophosphoryl-undecaprenol N-acetylglucosamine transferase.